A 194-amino-acid polypeptide reads, in one-letter code: Prostaglandin-H2 D-isomerase (194 aa).

A signal peptide spans 1–24 (MAASHTLWMGLVLLGVLGVLQTRA). Gln25 bears the Pyrrolidone carboxylic acid mark. Residue Asn51 is glycosylated (N-linked (GlcNAc...) asparagine). Cys65 serves as the catalytic Nucleophile. Asn78 carries N-linked (GlcNAc...) asparagine glycosylation. Cysteines 89 and 189 form a disulfide.

The protein belongs to the calycin superfamily. Lipocalin family. Monomer. In terms of tissue distribution, in the male reproductive system, it is expressed in the testis and epididymis, and is secreted into the seminal fluid.

The protein resides in the rough endoplasmic reticulum. Its subcellular location is the nucleus membrane. The protein localises to the golgi apparatus. It localises to the cytoplasm. It is found in the perinuclear region. The protein resides in the secreted. The catalysed reaction is prostaglandin H2 = prostaglandin D2. Functionally, catalyzes the conversion of PGH2 to PGD2, a prostaglandin involved in smooth muscle contraction/relaxation and a potent inhibitor of platelet aggregation. Involved in a variety of CNS functions, such as sedation, NREM sleep and PGE2-induced allodynia, and may have an anti-apoptotic role in oligodendrocytes. Binds small non-substrate lipophilic molecules, including biliverdin, bilirubin, retinal, retinoic acid and thyroid hormone, and may act as a scavenger for harmful hydrophobic molecules and as a secretory retinoid and thyroid hormone transporter. Possibly involved in development and maintenance of the blood-brain, blood-retina, blood-aqueous humor and blood-testis barrier. It is likely to play important roles in both maturation and maintenance of the central nervous system and male reproductive system. Involved in PLA2G3-dependent maturation of mast cells. PLA2G3 is secreted by immature mast cells and acts on nearby fibroblasts upstream to PTDGS to synthesize PGD2, which in turn promotes mast cell maturation and degranulation via PTGDR. The chain is Prostaglandin-H2 D-isomerase (PTGDS) from Equus caballus (Horse).